Consider the following 223-residue polypeptide: Gastrula zinc finger protein XlCGF52.1 (223 aa).

C2H2-type zinc fingers lie at residues 6-27 (FTCPECGKRFSQKSNCWHTEDH), 33-55 (FTCMECSKSFTVKSSLLSHQRVH), 61-83 (YTCTQCNKQFSHSAQLRAHISTH), 89-111 (FPCTECSKTFSLKHKLYKHQRIH), 117-139 (FQCLECGKSFSVKHGLLKHQRSH), 145-167 (YACSECQKTFAHKTTLMVHERIH), 173-195 (YECNDCGKRFIHSTNLNCHQKIH), and 201-223 (FTCTECGKSFSLKNKLVRHQKIH).

Belongs to the krueppel C2H2-type zinc-finger protein family.

The protein resides in the nucleus. May be involved in transcriptional regulation. This is Gastrula zinc finger protein XlCGF52.1 from Xenopus laevis (African clawed frog).